The sequence spans 613 residues: DNA polymerase II small subunit (613 aa).

It belongs to the DNA polymerase delta/II small subunit family. As to quaternary structure, heterodimer of a large subunit and a small subunit.

The catalysed reaction is DNA(n) + a 2'-deoxyribonucleoside 5'-triphosphate = DNA(n+1) + diphosphate. The enzyme catalyses Exonucleolytic cleavage in the 3'- to 5'-direction to yield nucleoside 5'-phosphates.. Functionally, possesses two activities: a DNA synthesis (polymerase) and an exonucleolytic activity that degrades single-stranded DNA in the 3' to 5' direction. Has a template-primer preference which is characteristic of a replicative DNA polymerase. In Pyrococcus furiosus (strain ATCC 43587 / DSM 3638 / JCM 8422 / Vc1), this protein is DNA polymerase II small subunit (polB).